Reading from the N-terminus, the 468-residue chain is Argininosuccinate lyase (468 aa).

It belongs to the lyase 1 family. Argininosuccinate lyase subfamily.

The protein localises to the cytoplasm. The enzyme catalyses 2-(N(omega)-L-arginino)succinate = fumarate + L-arginine. It participates in amino-acid biosynthesis; L-arginine biosynthesis; L-arginine from L-ornithine and carbamoyl phosphate: step 3/3. The protein is Argininosuccinate lyase of Hahella chejuensis (strain KCTC 2396).